A 251-amino-acid chain; its full sequence is B3 domain-containing protein REM7 (251 aa).

2 consecutive DNA-binding regions (TF-B3) follow at residues 11 to 103 and 170 to 251; these read NSHF…LGPS and CFVA…SRLN.

It is found in the nucleus. In Arabidopsis thaliana (Mouse-ear cress), this protein is B3 domain-containing protein REM7 (REM7).